The following is a 366-amino-acid chain: tRNA/tmRNA (uracil-C(5))-methyltransferase (366 aa).

Residues glutamine 190, tyrosine 218, asparagine 223, glutamate 239, and aspartate 299 each coordinate S-adenosyl-L-methionine. Cysteine 324 serves as the catalytic Nucleophile. Glutamate 358 (proton acceptor) is an active-site residue.

The protein belongs to the class I-like SAM-binding methyltransferase superfamily. RNA M5U methyltransferase family. TrmA subfamily.

The enzyme catalyses uridine(54) in tRNA + S-adenosyl-L-methionine = 5-methyluridine(54) in tRNA + S-adenosyl-L-homocysteine + H(+). It catalyses the reaction uridine(341) in tmRNA + S-adenosyl-L-methionine = 5-methyluridine(341) in tmRNA + S-adenosyl-L-homocysteine + H(+). In terms of biological role, dual-specificity methyltransferase that catalyzes the formation of 5-methyluridine at position 54 (m5U54) in all tRNAs, and that of position 341 (m5U341) in tmRNA (transfer-mRNA). The polypeptide is tRNA/tmRNA (uracil-C(5))-methyltransferase (Escherichia coli O6:H1 (strain CFT073 / ATCC 700928 / UPEC)).